A 248-amino-acid polypeptide reads, in one-letter code: ATP synthase subunit a, chloroplastic (248 aa).

A run of 5 helical transmembrane segments spans residues 38-58 (QVLI…TIAV), 96-116 (VPFI…GALL), 135-155 (INTT…AGLA), 200-220 (LVVA…VMFL), and 221-241 (GLFT…AYIG).

Belongs to the ATPase A chain family. In terms of assembly, F-type ATPases have 2 components, CF(1) - the catalytic core - and CF(0) - the membrane proton channel. CF(1) has five subunits: alpha(3), beta(3), gamma(1), delta(1), epsilon(1). CF(0) has four main subunits: a, b, b' and c.

Its subcellular location is the plastid. It is found in the chloroplast thylakoid membrane. Key component of the proton channel; it plays a direct role in the translocation of protons across the membrane. This is ATP synthase subunit a, chloroplastic from Cycas taitungensis (Prince sago).